The following is a 388-amino-acid chain: Alanine racemase 2 (388 aa).

Lys-39 serves as the catalytic Proton acceptor; specific for D-alanine. Lys-39 bears the N6-(pyridoxal phosphate)lysine mark. Arg-137 lines the substrate pocket. Catalysis depends on Tyr-267, which acts as the Proton acceptor; specific for L-alanine. Substrate is bound at residue Met-315.

This sequence belongs to the alanine racemase family. Pyridoxal 5'-phosphate is required as a cofactor.

It carries out the reaction L-alanine = D-alanine. It participates in amino-acid biosynthesis; D-alanine biosynthesis; D-alanine from L-alanine: step 1/1. In terms of biological role, catalyzes the interconversion of L-alanine and D-alanine. May also act on other amino acids. The chain is Alanine racemase 2 (alr2) from Caldanaerobacter subterraneus subsp. tengcongensis (strain DSM 15242 / JCM 11007 / NBRC 100824 / MB4) (Thermoanaerobacter tengcongensis).